A 979-amino-acid chain; its full sequence is Putative cellulose synthase-like protein D6 (979 aa).

Residues 1–24 (MMDGESPLRHPRISHVSNSGSDFG) form a disordered region. Low complexity predominate over residues 14–24 (SHVSNSGSDFG). 2 helical membrane-spanning segments follow: residues 116–136 (IIIA…ALFL) and 147–167 (ALWL…SWLL). Catalysis depends on residues Asp-247 and Asp-683. A run of 6 helical transmembrane segments spans residues 765–785 (IFIL…HFVV), 788–808 (LTGS…GLAV), 837–857 (LVAV…SFTL), 882–902 (ALMI…LFAV), 913–933 (WSNL…MYPF), and 946–966 (TVVY…YITI).

The protein belongs to the glycosyltransferase 2 family. Plant cellulose synthase-like D subfamily.

The protein localises to the golgi apparatus membrane. Its function is as follows. Thought to be a Golgi-localized beta-glycan synthase that polymerize the backbones of noncellulosic polysaccharides (hemicelluloses) of plant cell wall. In Arabidopsis thaliana (Mouse-ear cress), this protein is Putative cellulose synthase-like protein D6 (CSLD6).